The sequence spans 94 residues: Large ribosomal subunit protein uL23 (94 aa).

This sequence belongs to the universal ribosomal protein uL23 family. Part of the 50S ribosomal subunit. Contacts protein L29, and trigger factor when it is bound to the ribosome.

In terms of biological role, one of the early assembly proteins it binds 23S rRNA. One of the proteins that surrounds the polypeptide exit tunnel on the outside of the ribosome. Forms the main docking site for trigger factor binding to the ribosome. The protein is Large ribosomal subunit protein uL23 of Roseiflexus castenholzii (strain DSM 13941 / HLO8).